A 474-amino-acid chain; its full sequence is Glutamine synthetase (474 aa).

A GS beta-grasp domain is found at 14–99 (EKIELIDLKF…VCSIKEPRTG (86 aa)). The region spanning 106 to 474 (PRVIAQKAID…PYEFSIYYDV (369 aa)) is the GS catalytic domain. Mg(2+)-binding residues include Glu-131 and Glu-133. Position 211 (Glu-211) interacts with ATP. Glu-216 and Glu-224 together coordinate Mg(2+). L-glutamate is bound by residues 268–269 (NG) and Gly-269. Position 273 (His-273) interacts with Mg(2+). ATP-binding positions include 275–277 (HQS) and Ser-277. L-glutamate is bound by residues Arg-325, Glu-331, and Arg-343. Residues Arg-343, Arg-348, and Lys-357 each contribute to the ATP site. Mg(2+) is bound at residue Glu-362. Residue Arg-364 participates in L-glutamate binding. Residue Tyr-402 is modified to O-AMP-tyrosine.

This sequence belongs to the glutamine synthetase family. Oligomer of 12 subunits arranged in the form of two hexagons. Mg(2+) serves as cofactor.

The protein resides in the cytoplasm. It carries out the reaction L-glutamate + NH4(+) + ATP = L-glutamine + ADP + phosphate + H(+). With respect to regulation, the activity of this enzyme could be controlled by adenylation under conditions of abundant glutamine. Its function is as follows. Involved in nitrogen metabolism via ammonium assimilation. Catalyzes the ATP-dependent biosynthesis of glutamine from glutamate and ammonia. In Nostoc sp. (strain PCC 7120 / SAG 25.82 / UTEX 2576), this protein is Glutamine synthetase.